We begin with the raw amino-acid sequence, 359 residues long: Histidinol-phosphate aminotransferase (359 aa).

Residue Lys217 is modified to N6-(pyridoxal phosphate)lysine.

Belongs to the class-II pyridoxal-phosphate-dependent aminotransferase family. Histidinol-phosphate aminotransferase subfamily. As to quaternary structure, homodimer. Pyridoxal 5'-phosphate serves as cofactor.

The catalysed reaction is L-histidinol phosphate + 2-oxoglutarate = 3-(imidazol-4-yl)-2-oxopropyl phosphate + L-glutamate. It functions in the pathway amino-acid biosynthesis; L-histidine biosynthesis; L-histidine from 5-phospho-alpha-D-ribose 1-diphosphate: step 7/9. The polypeptide is Histidinol-phosphate aminotransferase (hisC) (Salmonella typhimurium (strain LT2 / SGSC1412 / ATCC 700720)).